The following is a 299-amino-acid chain: GTPase Era (299 aa).

One can recognise an Era-type G domain in the interval 9–177; the sequence is RSGSVAVIGR…VGDLLKLVPE (169 aa). Positions 17 to 24 are G1; sequence GRPNVGKS. 17 to 24 contributes to the GTP binding site; sequence GRPNVGKS. The tract at residues 43 to 47 is G2; the sequence is QTTRH. The segment at 64-67 is G3; it reads DTPG. GTP is bound by residues 64–68 and 126–129; these read DTPGL and NKVD. The interval 126–129 is G4; that stretch reads NKVD. The interval 156 to 158 is G5; that stretch reads VSA. The KH type-2 domain maps to 200–284; it reads VREQLMRQLG…FLETWVRVRE (85 aa).

It belongs to the TRAFAC class TrmE-Era-EngA-EngB-Septin-like GTPase superfamily. Era GTPase family. As to quaternary structure, monomer.

Its subcellular location is the cytoplasm. The protein localises to the cell inner membrane. An essential GTPase that binds both GDP and GTP, with rapid nucleotide exchange. Plays a role in 16S rRNA processing and 30S ribosomal subunit biogenesis and possibly also in cell cycle regulation and energy metabolism. This Xanthomonas oryzae pv. oryzae (strain MAFF 311018) protein is GTPase Era.